The primary structure comprises 132 residues: Fluoride-specific ion channel FluC (132 aa).

A run of 4 helical transmembrane segments spans residues 6–26 (VLQL…RFIV), 41–61 (GTLV…ILMI), 73–93 (FLIV…FETY), and 104–124 (AMLN…LGIW). Na(+) contacts are provided by Gly80 and Thr83.

Belongs to the fluoride channel Fluc/FEX (TC 1.A.43) family.

It localises to the cell inner membrane. It carries out the reaction fluoride(in) = fluoride(out). With respect to regulation, na(+) is not transported, but it plays an essential structural role and its presence is essential for fluoride channel function. Fluoride-specific ion channel. Important for reducing fluoride concentration in the cell, thus reducing its toxicity. The protein is Fluoride-specific ion channel FluC of Hydrogenovibrio crunogenus (strain DSM 25203 / XCL-2) (Thiomicrospira crunogena).